The following is a 346-amino-acid chain: NADP-dependent alcohol dehydrogenase C (346 aa).

Zn(2+)-binding residues include C41, H63, C94, C97, C100, C108, and C158.

This sequence belongs to the zinc-containing alcohol dehydrogenase family. Zn(2+) serves as cofactor.

The enzyme catalyses a primary alcohol + NADP(+) = an aldehyde + NADPH + H(+). The protein is NADP-dependent alcohol dehydrogenase C (adhC) of Mycobacterium bovis (strain ATCC BAA-935 / AF2122/97).